The following is a 274-amino-acid chain: 4-hydroxy-tetrahydrodipicolinate reductase (274 aa).

7 to 12 (GVTGRM) contacts NAD(+). Arginine 40 is an NADP(+) binding site. Residues 103-105 (GTT) and 127-130 (SANF) contribute to the NAD(+) site. Histidine 160 acts as the Proton donor/acceptor in catalysis. Histidine 161 is a (S)-2,3,4,5-tetrahydrodipicolinate binding site. The active-site Proton donor is the lysine 164. 170-171 (GT) serves as a coordination point for (S)-2,3,4,5-tetrahydrodipicolinate.

The protein belongs to the DapB family. As to quaternary structure, homotetramer.

The protein resides in the cytoplasm. It catalyses the reaction (S)-2,3,4,5-tetrahydrodipicolinate + NAD(+) + H2O = (2S,4S)-4-hydroxy-2,3,4,5-tetrahydrodipicolinate + NADH + H(+). The enzyme catalyses (S)-2,3,4,5-tetrahydrodipicolinate + NADP(+) + H2O = (2S,4S)-4-hydroxy-2,3,4,5-tetrahydrodipicolinate + NADPH + H(+). It participates in amino-acid biosynthesis; L-lysine biosynthesis via DAP pathway; (S)-tetrahydrodipicolinate from L-aspartate: step 4/4. Its function is as follows. Catalyzes the conversion of 4-hydroxy-tetrahydrodipicolinate (HTPA) to tetrahydrodipicolinate. This Blochmanniella floridana protein is 4-hydroxy-tetrahydrodipicolinate reductase.